The chain runs to 384 residues: 1-deoxy-D-xylulose 5-phosphate reductoisomerase (384 aa).

The NADPH site is built by Thr-10, Gly-11, Ser-12, Ile-13, Gly-36, Asn-38, and Asn-122. Lys-123 contacts 1-deoxy-D-xylulose 5-phosphate. Glu-124 serves as a coordination point for NADPH. Residue Asp-148 participates in Mn(2+) binding. 1-deoxy-D-xylulose 5-phosphate contacts are provided by Ser-149, Glu-150, Ser-174, and His-197. Glu-150 serves as a coordination point for Mn(2+). Residue Gly-203 participates in NADPH binding. 1-deoxy-D-xylulose 5-phosphate contacts are provided by Ser-210, Asn-215, Lys-216, and Glu-219. Glu-219 is a Mn(2+) binding site.

This sequence belongs to the DXR family. The cofactor is Mg(2+). Requires Mn(2+) as cofactor.

It carries out the reaction 2-C-methyl-D-erythritol 4-phosphate + NADP(+) = 1-deoxy-D-xylulose 5-phosphate + NADPH + H(+). The protein operates within isoprenoid biosynthesis; isopentenyl diphosphate biosynthesis via DXP pathway; isopentenyl diphosphate from 1-deoxy-D-xylulose 5-phosphate: step 1/6. Its function is as follows. Catalyzes the NADPH-dependent rearrangement and reduction of 1-deoxy-D-xylulose-5-phosphate (DXP) to 2-C-methyl-D-erythritol 4-phosphate (MEP). The polypeptide is 1-deoxy-D-xylulose 5-phosphate reductoisomerase (Geotalea daltonii (strain DSM 22248 / JCM 15807 / FRC-32) (Geobacter daltonii)).